The sequence spans 140 residues: Transcription antitermination protein NusB (140 aa).

Belongs to the NusB family.

Involved in transcription antitermination. Required for transcription of ribosomal RNA (rRNA) genes. Binds specifically to the boxA antiterminator sequence of the ribosomal RNA (rrn) operons. The protein is Transcription antitermination protein NusB of Myxococcus xanthus (strain DK1622).